The sequence spans 419 residues: 3-isopropylmalate dehydratase large subunit (419 aa).

The [4Fe-4S] cluster site is built by C300, C360, and C363.

The protein belongs to the aconitase/IPM isomerase family. LeuC type 2 subfamily. Heterodimer of LeuC and LeuD. The cofactor is [4Fe-4S] cluster.

It carries out the reaction (2R,3S)-3-isopropylmalate = (2S)-2-isopropylmalate. It functions in the pathway amino-acid biosynthesis; L-leucine biosynthesis; L-leucine from 3-methyl-2-oxobutanoate: step 2/4. Functionally, catalyzes the isomerization between 2-isopropylmalate and 3-isopropylmalate, via the formation of 2-isopropylmaleate. This Desulfatibacillum aliphaticivorans protein is 3-isopropylmalate dehydratase large subunit.